The following is a 347-amino-acid chain: Heme A synthase (347 aa).

The next 8 helical transmembrane spans lie at 14-34 (VKIW…IGGI), 96-116 (FHRL…LYFM), 129-149 (FILI…MVKS), 162-182 (LAMH…HFLL), 199-219 (VFYI…LVAG), 260-280 (FIHE…LLVL), 287-307 (MYLL…TFIY), and 311-331 (IILA…SIYL). Residue His262 participates in heme binding. His317 is a heme binding site.

This sequence belongs to the COX15/CtaA family. Type 2 subfamily. Interacts with CtaB. Requires heme b as cofactor.

The protein localises to the cell membrane. It catalyses the reaction Fe(II)-heme o + 2 A + H2O = Fe(II)-heme a + 2 AH2. It functions in the pathway porphyrin-containing compound metabolism; heme A biosynthesis; heme A from heme O: step 1/1. Its function is as follows. Catalyzes the conversion of heme O to heme A by two successive hydroxylations of the methyl group at C8. The first hydroxylation forms heme I, the second hydroxylation results in an unstable dihydroxymethyl group, which spontaneously dehydrates, resulting in the formyl group of heme A. This chain is Heme A synthase, found in Ehrlichia ruminantium (strain Welgevonden).